The primary structure comprises 339 residues: Protein LicA (339 aa).

Tandem repeats lie at residues 4 to 7 (INQS), 8 to 11 (INQS), 12 to 15 (INQS), 16 to 19 (INQS), 20 to 23 (INQS), 24 to 27 (INQS), 28 to 31 (INQS), 32 to 35 (INQS), and 36 to 39 (INQS). The tract at residues 4-39 (INQSINQSINQSINQSINQSINQSINQSINQSINQS) is 9 X 4 AA tandem repeats of I-N-Q-S.

The protein belongs to the peptidase S49 family.

In terms of biological role, mediates phase variation of the LOS 6A2 and 12D9 epitopes. Phase variation of H.influenza LOS epitopes expressed by LicA is determined by a translational switch. The protein is Protein LicA (licA) of Haemophilus influenzae.